Reading from the N-terminus, the 578-residue chain is Glutathione hydrolase 2 (578 aa).

The first 26 residues, 1–26 (MNSFMSLVRTATIALLLIAFLQNANA), serve as a signal peptide directing secretion. The N-linked (GlcNAc...) asparagine glycan is linked to N94. R103 contributes to the L-glutamate binding site. Residues N176 and N227 are each glycosylated (N-linked (GlcNAc...) asparagine). The active-site Nucleophile is T374. Residues T392, N394, E413, D416, 446 to 447 (SS), and 467 to 468 (GG) contribute to the L-glutamate site. A glycan (N-linked (GlcNAc...) asparagine) is linked at N511.

It belongs to the gamma-glutamyltransferase family. Expressed in roots, immature trichomes and pollen. In developing siliques, specifically expressed in the embryo, endosperm, outer integument and a small portion of the funiculus.

It localises to the secreted. The protein localises to the extracellular space. The protein resides in the apoplast. It catalyses the reaction an N-terminal (5-L-glutamyl)-[peptide] + an alpha-amino acid = 5-L-glutamyl amino acid + an N-terminal L-alpha-aminoacyl-[peptide]. The enzyme catalyses glutathione + H2O = L-cysteinylglycine + L-glutamate. It carries out the reaction an S-substituted glutathione + H2O = an S-substituted L-cysteinylglycine + L-glutamate. It functions in the pathway sulfur metabolism; glutathione metabolism. Its function is as follows. May be required for glutathione transport into developing seeds. The chain is Glutathione hydrolase 2 (GGT2) from Arabidopsis thaliana (Mouse-ear cress).